Reading from the N-terminus, the 235-residue chain is Orotidine 5'-phosphate decarboxylase (235 aa).

Residues Asp17, Lys39, 66–75 (DLKLHDIGNT), Thr121, Arg182, Gln191, Gly211, and Arg212 each bind substrate. Lys68 acts as the Proton donor in catalysis.

Belongs to the OMP decarboxylase family. Type 1 subfamily. As to quaternary structure, homodimer.

The enzyme catalyses orotidine 5'-phosphate + H(+) = UMP + CO2. The protein operates within pyrimidine metabolism; UMP biosynthesis via de novo pathway; UMP from orotate: step 2/2. Catalyzes the decarboxylation of orotidine 5'-monophosphate (OMP) to uridine 5'-monophosphate (UMP). This Rhodopseudomonas palustris (strain BisB5) protein is Orotidine 5'-phosphate decarboxylase.